The chain runs to 38 residues: Large ribosomal subunit protein bL36 (38 aa).

Belongs to the bacterial ribosomal protein bL36 family.

This chain is Large ribosomal subunit protein bL36, found in Prochlorococcus marinus (strain SARG / CCMP1375 / SS120).